A 187-amino-acid polypeptide reads, in one-letter code: ATP synthase subunit delta, chloroplastic (187 aa).

Belongs to the ATPase delta chain family. In terms of assembly, F-type ATPases have 2 components, F(1) - the catalytic core - and F(0) - the membrane proton channel. F(1) has five subunits: alpha(3), beta(3), gamma(1), delta(1), epsilon(1). CF(0) has four main subunits: a(1), b(1), b'(1) and c(10-14). The alpha and beta chains form an alternating ring which encloses part of the gamma chain. F(1) is attached to F(0) by a central stalk formed by the gamma and epsilon chains, while a peripheral stalk is formed by the delta, b and b' chains.

The protein resides in the plastid. Its subcellular location is the chloroplast thylakoid membrane. Its function is as follows. F(1)F(0) ATP synthase produces ATP from ADP in the presence of a proton or sodium gradient. F-type ATPases consist of two structural domains, F(1) containing the extramembraneous catalytic core and F(0) containing the membrane proton channel, linked together by a central stalk and a peripheral stalk. During catalysis, ATP synthesis in the catalytic domain of F(1) is coupled via a rotary mechanism of the central stalk subunits to proton translocation. In terms of biological role, this protein is part of the stalk that links CF(0) to CF(1). It either transmits conformational changes from CF(0) to CF(1) or is implicated in proton conduction. The polypeptide is ATP synthase subunit delta, chloroplastic (Thalassiosira pseudonana (Marine diatom)).